Reading from the N-terminus, the 240-residue chain is Tetraspanin-1 (240 aa).

Over 1–9 (MQCFSFIKT) the chain is Cytoplasmic. Residues 10-30 (IMILFNLLIFLCGAALLAVGI) traverse the membrane as a helical segment. The Extracellular portion of the chain corresponds to 31–52 (WVSIDGASFLKIFGPLSSSAMQ). A helical transmembrane segment spans residues 53–73 (FVNVGYFLIAAGAVVFALGFL). Residues 74–88 (GCYGAQTESKCALMT) lie on the Cytoplasmic side of the membrane. The chain crosses the membrane as a helical span at residues 89 to 109 (FFFILLLIFIAEVAAAVVALV). Topologically, residues 110-210 (YTTMAEHFLT…QQLLYDIRTN (101 aa)) are extracellular. N-linked (GlcNAc...) asparagine glycosylation is present at Asn-154. A helical transmembrane segment spans residues 211-231 (AVTVGGVAAGIGGLELAAMIV). Residues 232–240 (SMYLYCNLQ) lie on the Cytoplasmic side of the membrane.

Belongs to the tetraspanin (TM4SF) family. Interacts with SLC19A2. Interacts with NTRK1/TRKA.

Its subcellular location is the lysosome membrane. Structural component of specialized membrane microdomains known as tetraspanin-enriched microdomains (TERMs), which act as platforms for receptor clustering and signaling. Participates thereby in diverse biological functions such as cell signal transduction, adhesion, migration and protein trafficking. Regulates neuronal differentiation in response to NGF by facilitating NGF-mediated activation of NTRK1/TRKA receptor tyrosine kinase and subsequent downstream signaling pathways. Plays a role in the inhibition of TNFalpha-induced apoptosis. Mechanistically, inhibits the NF-kappa-B signaling pathway by blocking phosphorylation of CHUK. Also promotes the stability of the thiamine transporter 1/SLC19A2 in intestinal epithelial cells leading to an increase of thiamine uptake process. This Macaca fascicularis (Crab-eating macaque) protein is Tetraspanin-1 (TSPAN1).